We begin with the raw amino-acid sequence, 267 residues long: Cell division control protein 11 (267 aa).

The 258-residue stretch at 6–263 folds into the Septin-type G domain; that stretch reads QNRRFTIMAA…ENYRAAVLEG (258 aa). Residues 16–23 form a G1 motif region; the sequence is GPRGSGKS. Residues 16–23, Gly-66, 146–154, and Arg-212 contribute to the GTP site; these read GPRGSGKS and KSDGLSITE. The interval 63–66 is G3 motif; the sequence is DTPG. Residues 145–148 form a G4 motif region; sequence SKSD.

This sequence belongs to the TRAFAC class TrmE-Era-EngA-EngB-Septin-like GTPase superfamily. Septin GTPase family. As to quaternary structure, component of the septin complex.

Functionally, septins are GTPases involved in cytokinesis. The septins localize to the site of cleavage and act as a structural scaffold that recruits different components involved in diverse processes at specific stages during the cell cycle. Septins are also involved in cell morphogenesis, chitin deposition, cell cycle regulation, cell compartmentalization and spore wall formation. The polypeptide is Cell division control protein 11 (CDC11) (Encephalitozoon cuniculi (strain GB-M1) (Microsporidian parasite)).